The sequence spans 376 residues: General transcription factor IIH subunit 2 (376 aa).

The VWFA domain maps to 64–206 (HVMIVIDCSR…NIRCSAIGLS (143 aa)). The segment at 286-303 (CTQCGARHCSIPAECPVC) adopts a C4-type zinc-finger fold.

This sequence belongs to the GTF2H2 family. As to quaternary structure, component of the 7-subunit TFIIH core complex composed of xpb-1, xpd-1, gtf-2H1, gtf-2H2C, gtf-2H3, Y73F8A.24 and gtf-2H5, which is active in NER. The core complex associates with the 3-subunit CDK-activating kinase (CAK) module composed of cyh-1, cdk-7 and mnat-1 to form the 10-subunit holoenzyme (holo-TFIIH) active in transcription.

Its subcellular location is the nucleus. Functionally, component of the general transcription and DNA repair factor IIH (TFIIH) core complex, which is involved in general and transcription-coupled nucleotide excision repair (NER) of damaged DNA and, when complexed to CAK, in RNA transcription by RNA polymerase II. In NER, TFIIH acts by opening DNA around the lesion to allow the excision of the damaged oligonucleotide and its replacement by a new DNA fragment. In transcription, TFIIH has an essential role in transcription initiation. When the pre-initiation complex (PIC) has been established, TFIIH is required for promoter opening and promoter escape. Phosphorylation of the C-terminal tail (CTD) of the largest subunit of RNA polymerase II by the kinase module CAK controls the initiation of transcription. This is General transcription factor IIH subunit 2 from Caenorhabditis elegans.